A 160-amino-acid chain; its full sequence is 2-C-methyl-D-erythritol 2,4-cyclodiphosphate synthase (160 aa).

A divalent metal cation is bound by residues Asp-8 and His-10. 4-CDP-2-C-methyl-D-erythritol 2-phosphate contacts are provided by residues 8–10 (DVH) and 34–35 (HS). His-42 contributes to the a divalent metal cation binding site. 4-CDP-2-C-methyl-D-erythritol 2-phosphate contacts are provided by residues 56-58 (DIG), 61-65 (FPDTD), 100-106 (AQAPKML), 132-135 (TTTE), Phe-139, and Arg-142.

It belongs to the IspF family. Homotrimer. It depends on a divalent metal cation as a cofactor.

The catalysed reaction is 4-CDP-2-C-methyl-D-erythritol 2-phosphate = 2-C-methyl-D-erythritol 2,4-cyclic diphosphate + CMP. It functions in the pathway isoprenoid biosynthesis; isopentenyl diphosphate biosynthesis via DXP pathway; isopentenyl diphosphate from 1-deoxy-D-xylulose 5-phosphate: step 4/6. Functionally, involved in the biosynthesis of isopentenyl diphosphate (IPP) and dimethylallyl diphosphate (DMAPP), two major building blocks of isoprenoid compounds. Catalyzes the conversion of 4-diphosphocytidyl-2-C-methyl-D-erythritol 2-phosphate (CDP-ME2P) to 2-C-methyl-D-erythritol 2,4-cyclodiphosphate (ME-CPP) with a corresponding release of cytidine 5-monophosphate (CMP). The chain is 2-C-methyl-D-erythritol 2,4-cyclodiphosphate synthase from Proteus mirabilis (strain HI4320).